Consider the following 403-residue polypeptide: Probable tRNA sulfurtransferase (403 aa).

One can recognise a THUMP domain in the interval 60 to 165; sequence KLAEERLKPI…KEGVFLSCRT (106 aa). ATP is bound by residues 183-184, 208-209, arginine 265, glycine 287, and glutamine 296; these read ML and HF.

The protein belongs to the ThiI family.

It is found in the cytoplasm. The catalysed reaction is [ThiI sulfur-carrier protein]-S-sulfanyl-L-cysteine + a uridine in tRNA + 2 reduced [2Fe-2S]-[ferredoxin] + ATP + H(+) = [ThiI sulfur-carrier protein]-L-cysteine + a 4-thiouridine in tRNA + 2 oxidized [2Fe-2S]-[ferredoxin] + AMP + diphosphate. The enzyme catalyses [ThiS sulfur-carrier protein]-C-terminal Gly-Gly-AMP + S-sulfanyl-L-cysteinyl-[cysteine desulfurase] + AH2 = [ThiS sulfur-carrier protein]-C-terminal-Gly-aminoethanethioate + L-cysteinyl-[cysteine desulfurase] + A + AMP + 2 H(+). Its pathway is cofactor biosynthesis; thiamine diphosphate biosynthesis. Functionally, catalyzes the ATP-dependent transfer of a sulfur to tRNA to produce 4-thiouridine in position 8 of tRNAs, which functions as a near-UV photosensor. Also catalyzes the transfer of sulfur to the sulfur carrier protein ThiS, forming ThiS-thiocarboxylate. This is a step in the synthesis of thiazole, in the thiamine biosynthesis pathway. The sulfur is donated as persulfide by IscS. This is Probable tRNA sulfurtransferase from Listeria welshimeri serovar 6b (strain ATCC 35897 / DSM 20650 / CCUG 15529 / CIP 8149 / NCTC 11857 / SLCC 5334 / V8).